The sequence spans 704 residues: ATP-dependent zinc metalloprotease FTSH 5, chloroplastic (704 aa).

The transit peptide at 1–58 (MATTSSNPLLLSSNFLGSQIIISAPTPKTTTKSLPFSVISRKRYQISQSEKLMKSLPS) directs the protein to the chloroplast. The transit peptide at 59–76 (QAALAALLFSSSSPQALA) directs the protein to the thylakoid. Residues 193-213 (FDFIGNLLFPLLAFGGLFYLF) traverse the membrane as a helical segment. 290–297 (GPPGTGKT) lines the ATP pocket. His512 contributes to the Zn(2+) binding site. Glu513 is a catalytic residue. Zn(2+) contacts are provided by His516 and Asp593.

The protein in the N-terminal section; belongs to the AAA ATPase family. This sequence in the C-terminal section; belongs to the peptidase M41 family. As to quaternary structure, heterohexamers with FTSH1, FTSH2 and FTSH8. Requires Zn(2+) as cofactor. Ubiquitous.

It is found in the plastid. The protein resides in the chloroplast thylakoid membrane. In terms of biological role, part of a complex that function as an ATP-dependent zinc metallopeptidase. Involved in the thylakoid formation and in the removal of damaged D1 in the photosystem II, preventing cell death under high-intensity light conditions. Not involved in the degradation of the light-harvesting complex of photosystem II (LHC II) or in thermotolerance. The protein is ATP-dependent zinc metalloprotease FTSH 5, chloroplastic (FTSH5) of Arabidopsis thaliana (Mouse-ear cress).